Consider the following 749-residue polypeptide: Polyribonucleotide nucleotidyltransferase (749 aa).

Residues D487 and D493 each contribute to the Mg(2+) site. One can recognise a KH domain in the interval 554–613; the sequence is PSTTTIKIDKDKIRDIIGPGGKIIKEICETSGAKIDISDDGTVSVYASDRDKLKVALDKI. The 69-residue stretch at 623-691 folds into the S1 motif domain; the sequence is GEIFNGTVVK…NKGKAKLTIK (69 aa). Residues 691–749 form a disordered region; that stretch reads KNADKDKSSNNTKPKTNVNNTNKDNSEPEQRRDSSKKRAWNEDNNAETAEVITERKYFN. Residues 699–713 show a composition bias toward low complexity; it reads SNNTKPKTNVNNTNK. Positions 714–723 are enriched in basic and acidic residues; that stretch reads DNSEPEQRRD.

This sequence belongs to the polyribonucleotide nucleotidyltransferase family. Requires Mg(2+) as cofactor.

Its subcellular location is the cytoplasm. The enzyme catalyses RNA(n+1) + phosphate = RNA(n) + a ribonucleoside 5'-diphosphate. Involved in mRNA degradation. Catalyzes the phosphorolysis of single-stranded polyribonucleotides processively in the 3'- to 5'-direction. The sequence is that of Polyribonucleotide nucleotidyltransferase from Rickettsia conorii (strain ATCC VR-613 / Malish 7).